The primary structure comprises 197 residues: Peptidoglycan-recognition protein 1 (197 aa).

The first 23 residues, 1–23 (MKLATITFFLLTEIFFYISYAEA), serve as a signal peptide directing secretion. Cystine bridges form between C31-C154 and C68-C74. Residues 53-180 (KPLERVVIHH…RNVKATKSPG (128 aa)) enclose the N-acetylmuramoyl-L-alanine amidase domain.

It belongs to the N-acetylmuramoyl-L-alanine amidase 2 family. Localizes to plasma (at protein level).

It localises to the secreted. Its function is as follows. Peptidoglycan-recognition protein probably involved in innate immunity by binding to peptidoglycans (PGN) of bacteria and activating the prophenoloxidase (proPO) cascade immune response. Binds to 1,3-beta-D-glucan and PGN. This chain is Peptidoglycan-recognition protein 1 (PGRP-1), found in Holotrichia diomphalia (Korean black chafer).